The sequence spans 152 residues: MRCCYCGHGESKVLETRSAEEGRVIRRRRECMECNRRFTTLERIEETPLIVRKKGGSLEAFDRNKLLSGLLKACEKRPIPLDRLEELVTTVERDLRSQYDREVPSREIGEMLMARLRNIDEVAYVRFASVYRQFTDVGRFLEELEGLLKRKT.

Residues Cys3–Cys34 fold into a zinc finger. Residues Leu49–Arg139 form the ATP-cone domain.

The protein belongs to the NrdR family. Zn(2+) serves as cofactor.

Negatively regulates transcription of bacterial ribonucleotide reductase nrd genes and operons by binding to NrdR-boxes. This is Transcriptional repressor NrdR from Heliobacterium modesticaldum (strain ATCC 51547 / Ice1).